We begin with the raw amino-acid sequence, 841 residues long: MTKELRSKLFTILKIAFALTLFTIVAITLYKELSHINLKDAIKSFSKINRFWLVALFLSGGASIIVLSIYDVILAKTLKLKIGLAKTIRIGYIVNALNAVVGFGGFIGASVRFLFYKNTTDDKKALFHTISIVLISMLTGLSLLSILVVIHVFDISHIFTPYPWVKWLMYVVALFLPIFVVFTIIKPVQKTHRLLGVYCTIVSGVEWFVAALVLYMSMAIVGVQIPFATFMGIFILAALSGLISFIPGGFGTFDLVVLLGLKALNVNEEAIVLGLSLYRFAYYLFPVLIALILSTFEFRSTAKRYWEDSRILVPVKDMTSLLGSYQKDIIARIPSFAIALLLLFTSLVFFLNNLTIIYDGLYDPNHYIYYIIVSIHTCACLLLLLNVIGVYKLSKRAILFSIISVLFIFIATAYTYASFILLSWLTVIFILLLVFYRRARVIKRPFRYSKLLLSVITGAIILYINHLVIKSTFYSLEIYHIEMLTSILRYYFWITILLVAIIVGVIVWWFEYRYRSSNSRDNIATCESIIDKYNGNYLSHLMYSGDKKFFINDNKDAFVMYRYHNNTYIILGDPIGNSESFYSLLEAFYKEAEYLGYDIIFYQVTDKYMSLYHSFGNQFFKLGEEAVINLTSFTTSGKKKRGLRATLNKLDDLGYSFEVLEPPFSQQMITDLKAISDDWLADKNEMHFSVGSFDEHYISQAPIGVLKDNEQSVIAFCTLMPTYYNGVISVDLIRWKQDIELPLMDSLYLNMLLWSKDNNYEHFNMGMATLSNVGQIPYSFYGERIAGRVFEHFNGLYRFQGLRRYKEKFNPKWEPRFLVYRKHQSLWVSMLKVMRVIRKNN.

Residues 1–8 (MTKELRSK) lie on the Cytoplasmic side of the membrane. A helical transmembrane segment spans residues 9-29 (LFTILKIAFALTLFTIVAITL). Topologically, residues 30–52 (YKELSHINLKDAIKSFSKINRFW) are extracellular. Residues 53-73 (LVALFLSGGASIIVLSIYDVI) form a helical membrane-spanning segment. At 74-89 (LAKTLKLKIGLAKTIR) the chain is on the cytoplasmic side. Residues 90–110 (IGYIVNALNAVVGFGGFIGAS) traverse the membrane as a helical segment. At 111–129 (VRFLFYKNTTDDKKALFHT) the chain is on the extracellular side. The helical transmembrane segment at 130-150 (ISIVLISMLTGLSLLSILVVI) threads the bilayer. At 151–164 (HVFDISHIFTPYPW) the chain is on the cytoplasmic side. A helical membrane pass occupies residues 165–185 (VKWLMYVVALFLPIFVVFTII). Residues 186–193 (KPVQKTHR) are Extracellular-facing. A helical transmembrane segment spans residues 194-216 (LLGVYCTIVSGVEWFVAALVLYM). The Cytoplasmic portion of the chain corresponds to 217–229 (SMAIVGVQIPFAT). A helical transmembrane segment spans residues 230–250 (FMGIFILAALSGLISFIPGGF). Over 251-270 (GTFDLVVLLGLKALNVNEEA) the chain is Extracellular. A helical membrane pass occupies residues 271-291 (IVLGLSLYRFAYYLFPVLIAL). Residues 292–336 (ILSTFEFRSTAKRYWEDSRILVPVKDMTSLLGSYQKDIIARIPSF) lie on the Cytoplasmic side of the membrane. A helical membrane pass occupies residues 337-357 (AIALLLLFTSLVFFLNNLTII). Over 358–367 (YDGLYDPNHY) the chain is Extracellular. Residues 368–388 (IYYIIVSIHTCACLLLLLNVI) traverse the membrane as a helical segment. Residues 389-392 (GVYK) are Cytoplasmic-facing. The helical transmembrane segment at 393 to 413 (LSKRAILFSIISVLFIFIATA) threads the bilayer. Over 414–415 (YT) the chain is Extracellular. The chain crosses the membrane as a helical span at residues 416-436 (YASFILLSWLTVIFILLLVFY). Residues 437-448 (RRARVIKRPFRY) lie on the Cytoplasmic side of the membrane. The helical transmembrane segment at 449–469 (SKLLLSVITGAIILYINHLVI) threads the bilayer. Topologically, residues 470-489 (KSTFYSLEIYHIEMLTSILR) are extracellular. Residues 490–510 (YYFWITILLVAIIVGVIVWWF) traverse the membrane as a helical segment. The Cytoplasmic portion of the chain corresponds to 511 to 841 (EYRYRSSNSR…KVMRVIRKNN (331 aa)).

The protein belongs to the LPG synthase family.

The protein localises to the cell membrane. It carries out the reaction L-lysyl-tRNA(Lys) + a 1,2-diacyl-sn-glycero-3-phospho-(1'-sn-glycerol) = a 1,2-diacyl-sn-glycero-3-phospho-1'-(3'-O-L-lysyl)-sn-glycerol + tRNA(Lys). Catalyzes the transfer of a lysyl group from L-lysyl-tRNA(Lys) to membrane-bound phosphatidylglycerol (PG), which produces lysylphosphatidylglycerol (LPG), a major component of the bacterial membrane with a positive net charge. LPG synthesis contributes to bacterial virulence as it is involved in the resistance mechanism against cationic antimicrobial peptides (CAMP) produces by the host's immune system (defensins, cathelicidins) and by the competing microorganisms (bacteriocins). In fact, the modification of anionic phosphatidylglycerol with positively charged L-lysine results in repulsion of the peptides. This is Phosphatidylglycerol lysyltransferase (mprF) from Staphylococcus xylosus.